The chain runs to 593 residues: Methionine--tRNA ligase, mitochondrial (593 aa).

A mitochondrion-targeting transit peptide spans 1 to 29 (MLRVSAFRLLGRRGASRVSLLEDFSFRYY). Residues 52 to 62 (FYVNAAPHIGH) carry the 'HIGH' region motif. The 'KMSKS' region signature appears at 347–351 (KMSKS). Lys-350 serves as a coordination point for ATP.

Belongs to the class-I aminoacyl-tRNA synthetase family.

It is found in the mitochondrion matrix. It carries out the reaction tRNA(Met) + L-methionine + ATP = L-methionyl-tRNA(Met) + AMP + diphosphate. The polypeptide is Methionine--tRNA ligase, mitochondrial (MARS2) (Bos taurus (Bovine)).